A 251-amino-acid chain; its full sequence is Methionine aminopeptidase (251 aa).

His76 provides a ligand contact to substrate. Asp93, Asp104, and His168 together coordinate a divalent metal cation. His175 provides a ligand contact to substrate. Residues Glu202 and Glu233 each contribute to the a divalent metal cation site.

The protein belongs to the peptidase M24A family. Methionine aminopeptidase type 1 subfamily. As to quaternary structure, monomer. It depends on Co(2+) as a cofactor. The cofactor is Zn(2+). Requires Mn(2+) as cofactor. Fe(2+) serves as cofactor.

The enzyme catalyses Release of N-terminal amino acids, preferentially methionine, from peptides and arylamides.. Its function is as follows. Removes the N-terminal methionine from nascent proteins. The N-terminal methionine is often cleaved when the second residue in the primary sequence is small and uncharged (Met-Ala-, Cys, Gly, Pro, Ser, Thr, or Val). Requires deformylation of the N(alpha)-formylated initiator methionine before it can be hydrolyzed. The sequence is that of Methionine aminopeptidase from Staphylococcus epidermidis (strain ATCC 35984 / DSM 28319 / BCRC 17069 / CCUG 31568 / BM 3577 / RP62A).